We begin with the raw amino-acid sequence, 138 residues long: ATP synthase epsilon chain (138 aa).

Belongs to the ATPase epsilon chain family. In terms of assembly, F-type ATPases have 2 components, CF(1) - the catalytic core - and CF(0) - the membrane proton channel. CF(1) has five subunits: alpha(3), beta(3), gamma(1), delta(1), epsilon(1). CF(0) has three main subunits: a, b and c.

It localises to the cell membrane. Produces ATP from ADP in the presence of a proton gradient across the membrane. This is ATP synthase epsilon chain (atpC) from Buchnera aphidicola subsp. Acyrthosiphon pisum (strain APS) (Acyrthosiphon pisum symbiotic bacterium).